A 368-amino-acid polypeptide reads, in one-letter code: Glutamyl-tRNA reductase (368 aa).

Substrate is bound by residues 43–46, Ser-89, 94–96, and Gln-100; these read TCHR and EHQ. Catalysis depends on Cys-44, which acts as the Nucleophile. Residue 164 to 169 participates in NADP(+) binding; sequence GTGMMG.

The protein belongs to the glutamyl-tRNA reductase family. In terms of assembly, homodimer.

It catalyses the reaction (S)-4-amino-5-oxopentanoate + tRNA(Glu) + NADP(+) = L-glutamyl-tRNA(Glu) + NADPH + H(+). The protein operates within porphyrin-containing compound metabolism; protoporphyrin-IX biosynthesis; 5-aminolevulinate from L-glutamyl-tRNA(Glu): step 1/2. Catalyzes the NADPH-dependent reduction of glutamyl-tRNA(Glu) to glutamate 1-semialdehyde (GSA). This is Glutamyl-tRNA reductase from Thermosipho melanesiensis (strain DSM 12029 / CIP 104789 / BI429).